Consider the following 143-residue polypeptide: MAKKIQAYIKLQVKAGQANPSPPVGPALGQHGVNIMEFCKAFNARTQGMEPGLPTPVIITVYSDRSFTFETKSTPASVLLKKAAGISSGSSRPNTQKVGTVNRAQLEEIAKAKQADLTAADLEAAVRTIAGSARSMGLNVEGV.

The protein belongs to the universal ribosomal protein uL11 family. Part of the ribosomal stalk of the 50S ribosomal subunit. Interacts with L10 and the large rRNA to form the base of the stalk. L10 forms an elongated spine to which L12 dimers bind in a sequential fashion forming a multimeric L10(L12)X complex. Post-translationally, one or more lysine residues are methylated.

Functionally, forms part of the ribosomal stalk which helps the ribosome interact with GTP-bound translation factors. This Azotobacter vinelandii (strain DJ / ATCC BAA-1303) protein is Large ribosomal subunit protein uL11.